Reading from the N-terminus, the 755-residue chain is 17S U2 SnRNP complex component HTATSF1 (755 aa).

2 disordered regions span residues 1-53 and 81-122; these read MSGT…YEWD and GASS…KAES. Residue S2 is modified to N-acetylserine. Over residues 90-122 the composition is skewed to basic and acidic residues; the sequence is EDVHARTAEEPPQEKAPEPTDARKKGEKRKAES. 2 RRM domains span residues 133–218 and 264–349; these read TNVY…VAKF and RVVI…AWDG. Residues 259 to 353 are U2AF homology motif (UHM); it reads RMRHERVVII…AQAWDGTTDY (95 aa). The residue at position 297 (K297) is an N6-acetyllysine. Residues 380-415 form a disordered region; it reads RGLRRSDSVSASERAGPSRARHFSEHPSTSKMNAQE. The interval 381–755 is mediates interaction with the P-TEFb complex; it reads GLRRSDSVSA…LSSDDDDDDI (375 aa). Phosphoserine is present on residues S387, S403, S407, and S409. The segment covering 405–415 has biased composition (polar residues); sequence HPSTSKMNAQE. Residues K429 and K430 each participate in a glycyl lysine isopeptide (Lys-Gly) (interchain with G-Cter in SUMO2) cross-link. The disordered stretch occupies residues 433 to 755; that stretch reads KTEDGGEFEE…LSSDDDDDDI (323 aa). 3 positions are modified to phosphoserine: S445, S452, and S453. Basic and acidic residues predominate over residues 462-476; sequence CPEKESEEGCPKRGF. S481, S485, S494, S498, S521, and S529 each carry phosphoserine. A compositionally biased stretch (basic and acidic residues) spans 508-538; that stretch reads LKNDCEENGLAKESEDDLNKESEEEVGPTKE. The segment covering 539–552 has biased composition (acidic residues); that stretch reads SEEDDSEKESDEDC. The span at 553 to 563 shows a compositional bias: basic and acidic residues; sequence SEKQSEDGSER. A phosphoserine mark is found at S557, S561, and S579. Positions 564–579 are enriched in acidic residues; it reads EFEENGLEKDLDEEGS. Residues 580–590 show a composition bias toward basic and acidic residues; it reads EKELHENVLDK. Positions 591 to 606 are enriched in acidic residues; it reads ELEENDSENSEFEDDG. Phosphoserine is present on residues S597, S600, S607, S616, and S624. 2 stretches are compositionally biased toward acidic residues: residues 613 to 633 and 640 to 651; these read EEGSEREFDEDSDEKEEEEDT and DESDEKEDEEYA. At T633 the chain carries Phosphothreonine. Position 642 is a phosphoserine (S642). Basic and acidic residues predominate over residues 652–674; that stretch reads DEKGLEAADKKAEEGDADEKLFE. Over residues 675–713 the composition is skewed to acidic residues; the sequence is ESDDKEDEDADGKEVEDADEKLFEDDDSNEKLFDEEEDS. S676, S702, S713, S714, and S721 each carry phosphoserine. A compositionally biased stretch (basic and acidic residues) spans 714 to 725; sequence SEKLFDDSDERG. S748 carries the phosphoserine; by CK2 modification.

The protein belongs to the HTATSF1 family. As to quaternary structure, component of the 17S U2 SnRNP complex, a ribonucleoprotein complex that contains small nuclear RNA (snRNA) U2 and a number of specific proteins. Within the 17S U2 SnRNP complex, interacts (via UHM region) directly with SF3B1. Component of a complex which is at least composed of HTATSF1/Tat-SF1, the P-TEFb complex components CDK9 and CCNT1, RNA polymerase II, SUPT5H, and NCL/nucleolin. Interacts with GTF2F2/RAP30 and POLR2A. Interacts with TCERG1/CA150. Interacts with (poly-ADP-ribosylated) RPA1; promoting HTATSF1 recruitment to DNA damage sites. Interacts (when phosphorylated) with TOPBP1; promoting recruitment of TOPBP1 to DNA damage sites during S-phase. In terms of processing, phosphorylation at Ser-748 by CK2 during S-phase in response to DNA damage promotes interaction with TOPBP1 and double-strand break (DSB) repair via homologous recombination. Widely expressed.

The protein localises to the nucleus. Its subcellular location is the chromosome. Component of the 17S U2 SnRNP complex of the spliceosome, a large ribonucleoprotein complex that removes introns from transcribed pre-mRNAs. The 17S U2 SnRNP complex (1) directly participates in early spliceosome assembly and (2) mediates recognition of the intron branch site during pre-mRNA splicing by promoting the selection of the pre-mRNA branch-site adenosine, the nucleophile for the first step of splicing. Within the 17S U2 SnRNP complex, HTATSF1 is required to stabilize the branchpoint-interacting stem loop. HTATSF1 is displaced from the 17S U2 SnRNP complex before the stable addition of the 17S U2 SnRNP complex to the spliceosome, destabilizing the branchpoint-interacting stem loop and allowing to probe intron branch site sequences. Also acts as a regulator of transcriptional elongation, possibly by mediating the reciprocal stimulatory effect of splicing on transcriptional elongation. Involved in double-strand break (DSB) repair via homologous recombination in S-phase by promoting the recruitment of TOPBP1 to DNA damage sites. Mechanistically, HTATSF1 is (1) recruited to DNA damage sites in S-phase via interaction with poly-ADP-ribosylated RPA1 and (2) phosphorylated by CK2, promoting recruitment of TOPBP1, thereby facilitating RAD51 nucleofilaments formation and RPA displacement, followed by homologous recombination. Its function is as follows. (Microbial infection) In case of infection by HIV-1, it is up-regulated by the HIV-1 proteins NEF and gp120, acts as a cofactor required for the Tat-enhanced transcription of the virus. The protein is 17S U2 SnRNP complex component HTATSF1 of Homo sapiens (Human).